Here is a 296-residue protein sequence, read N- to C-terminus: Cobalamin trafficking protein CblD (296 aa).

The N-terminal 92 residues, 1-92, are a transit peptide targeting the mitochondrion; sequence MANVLCNRAR…HLNGTAAQRK (92 aa).

As to quaternary structure, heterodimer with MMACHC. Forms a multiprotein complex with MMACHC, MTR and MTRR.

It is found in the cytoplasm. Its subcellular location is the mitochondrion. Involved in cobalamin metabolism and trafficking. Plays a role in regulating the biosynthesis and the proportion of two coenzymes, methylcob(III)alamin (MeCbl) and 5'-deoxyadenosylcobalamin (AdoCbl). Promotes oxidation of cob(II)alamin bound to MMACHC. The processing of cobalamin in the cytosol occurs in a multiprotein complex composed of at least MMACHC, MMADHC, MTRR (methionine synthase reductase) and MTR (methionine synthase) which may contribute to shuttle safely and efficiently cobalamin towards MTR in order to produce methionine. This Gallus gallus (Chicken) protein is Cobalamin trafficking protein CblD (MMADHC).